The primary structure comprises 485 residues: UDP-N-acetylmuramate--L-alanine ligase (485 aa).

120 to 126 provides a ligand contact to ATP; sequence GSHGKTT.

This sequence belongs to the MurCDEF family.

It localises to the cytoplasm. It catalyses the reaction UDP-N-acetyl-alpha-D-muramate + L-alanine + ATP = UDP-N-acetyl-alpha-D-muramoyl-L-alanine + ADP + phosphate + H(+). Its pathway is cell wall biogenesis; peptidoglycan biosynthesis. Cell wall formation. This Rickettsia massiliae (strain Mtu5) protein is UDP-N-acetylmuramate--L-alanine ligase.